Here is a 66-residue protein sequence, read N- to C-terminus: UPF0370 protein CKO_00315 (66 aa).

The chain crosses the membrane as a helical span at residues 4–24 (LAKYWWILVLVFLVGVLINVI). The tract at residues 39-66 (KPELPPHRDFNDKWDDDDDWPKKDQPKK) is disordered. Basic and acidic residues predominate over residues 42–51 (LPPHRDFNDK).

It belongs to the UPF0370 family.

It is found in the cell membrane. This Citrobacter koseri (strain ATCC BAA-895 / CDC 4225-83 / SGSC4696) protein is UPF0370 protein CKO_00315.